The sequence spans 199 residues: Recombination protein RecR (199 aa).

A C4-type zinc finger spans residues 57 to 72; sequence CSICGNITDEDPCAIC. The Toprim domain occupies 80-176; that stretch reads STILVVEQPK…KVTRLAHGLS (97 aa).

This sequence belongs to the RecR family.

In terms of biological role, may play a role in DNA repair. It seems to be involved in an RecBC-independent recombinational process of DNA repair. It may act with RecF and RecO. In Lacticaseibacillus casei (strain BL23) (Lactobacillus casei), this protein is Recombination protein RecR.